Reading from the N-terminus, the 431-residue chain is Glutamate-1-semialdehyde 2,1-aminomutase (431 aa).

Lys264 carries the N6-(pyridoxal phosphate)lysine modification.

Belongs to the class-III pyridoxal-phosphate-dependent aminotransferase family. HemL subfamily. In terms of assembly, homodimer. The cofactor is pyridoxal 5'-phosphate.

Its subcellular location is the cytoplasm. The enzyme catalyses (S)-4-amino-5-oxopentanoate = 5-aminolevulinate. Its pathway is porphyrin-containing compound metabolism; protoporphyrin-IX biosynthesis; 5-aminolevulinate from L-glutamyl-tRNA(Glu): step 2/2. This is Glutamate-1-semialdehyde 2,1-aminomutase from Clostridium beijerinckii (strain ATCC 51743 / NCIMB 8052) (Clostridium acetobutylicum).